The sequence spans 1070 residues: DNA-directed RNA polymerase subunit beta (1070 aa).

This sequence belongs to the RNA polymerase beta chain family. As to quaternary structure, in plastids the minimal PEP RNA polymerase catalytic core is composed of four subunits: alpha, beta, beta', and beta''. When a (nuclear-encoded) sigma factor is associated with the core the holoenzyme is formed, which can initiate transcription.

The protein localises to the plastid. The protein resides in the chloroplast. The enzyme catalyses RNA(n) + a ribonucleoside 5'-triphosphate = RNA(n+1) + diphosphate. Functionally, DNA-dependent RNA polymerase catalyzes the transcription of DNA into RNA using the four ribonucleoside triphosphates as substrates. The sequence is that of DNA-directed RNA polymerase subunit beta from Phaseolus vulgaris (Kidney bean).